We begin with the raw amino-acid sequence, 344 residues long: GTP 3',8-cyclase (344 aa).

The Radical SAM core domain maps to 19-245 (PFGRAVTYLR…DIPYRTGGPA (227 aa)). Residue arginine 28 participates in GTP binding. Residues cysteine 35 and cysteine 39 each contribute to the [4Fe-4S] cluster site. Tyrosine 41 contacts S-adenosyl-L-methionine. Cysteine 42 is a [4Fe-4S] cluster binding site. Residue arginine 77 coordinates GTP. Glycine 81 contacts S-adenosyl-L-methionine. Threonine 111 lines the GTP pocket. Serine 135 is an S-adenosyl-L-methionine binding site. A GTP-binding site is contributed by lysine 171. Methionine 205 contributes to the S-adenosyl-L-methionine binding site. [4Fe-4S] cluster is bound by residues cysteine 268 and cysteine 271. Residue 273–275 (RVR) participates in GTP binding. Cysteine 285 contacts [4Fe-4S] cluster.

It belongs to the radical SAM superfamily. MoaA family. In terms of assembly, monomer and homodimer. Requires [4Fe-4S] cluster as cofactor.

It carries out the reaction GTP + AH2 + S-adenosyl-L-methionine = (8S)-3',8-cyclo-7,8-dihydroguanosine 5'-triphosphate + 5'-deoxyadenosine + L-methionine + A + H(+). It participates in cofactor biosynthesis; molybdopterin biosynthesis. Its function is as follows. Catalyzes the cyclization of GTP to (8S)-3',8-cyclo-7,8-dihydroguanosine 5'-triphosphate. This is GTP 3',8-cyclase from Brucella canis (strain ATCC 23365 / NCTC 10854 / RM-666).